The sequence spans 303 residues: Putative CRISPR-associated endonuclease Cas1 2 (303 aa).

Residue Glu-149 participates in Mn(2+) binding.

This sequence belongs to the CRISPR-associated endonuclease Cas1 family. As to quaternary structure, homodimer, forms a heterotetramer with a Cas2 homodimer. The cofactor is Mg(2+). Mn(2+) serves as cofactor.

CRISPR (clustered regularly interspaced short palindromic repeat), is an adaptive immune system that provides protection against mobile genetic elements (viruses, transposable elements and conjugative plasmids). CRISPR clusters contain sequences complementary to antecedent mobile elements and target invading nucleic acids. CRISPR clusters are transcribed and processed into CRISPR RNA (crRNA). Acts as a dsDNA endonuclease. Involved in the integration of spacer DNA into the CRISPR cassette. The protein is Putative CRISPR-associated endonuclease Cas1 2 of Methanospirillum hungatei JF-1 (strain ATCC 27890 / DSM 864 / NBRC 100397 / JF-1).